The primary structure comprises 364 residues: Nuclear hormone receptor family member nhr-53 (364 aa).

The segment at residues 20-95 is a DNA-binding region (nuclear receptor); it reads PSYCLICCEV…VGMQRSSVQQ (76 aa). NR C4-type zinc fingers lie at residues 23–43 and 59–83; these read CLIC…CRAC and CPKN…YEKC. The 254-residue stretch at 110–363 folds into the NR LBD domain; that stretch reads REEPVLDTMR…KNLYDMFSPT (254 aa).

Belongs to the nuclear hormone receptor family.

It localises to the nucleus. In terms of biological role, orphan nuclear receptor. The polypeptide is Nuclear hormone receptor family member nhr-53 (nhr-53) (Caenorhabditis elegans).